Reading from the N-terminus, the 243-residue chain is Voltage-gated monoatomic cation channel TMEM109 (243 aa).

A signal peptide spans 1–33 (MAASSISSPWGKHVFKAILMVLVALILLHSALA). The Lumenal portion of the chain corresponds to 34-83 (QSRRDFAPPGQQKREAPVDVLTQIGRSVRGTLDAWIGPETMHLVSESSSQ). Residues 84 to 104 (VLWAISSAISVAFFALSGIAA) traverse the membrane as a helical segment. The Cytoplasmic segment spans residues 105–135 (QLLNALGLAGDYLAQGLKLSPGQVQTFLLWG). The helical transmembrane segment at 136–156 (AGALVVYWLLSLLLGLVLALL) threads the bilayer. The Lumenal portion of the chain corresponds to 157–185 (GRILWGLKLVIFLAGFVALMRSVPDPSTR). A helical transmembrane segment spans residues 186–205 (ALLLLALLILYALLSRLTGS). Residues 206–243 (RASGAQLEAKVRGLERQVEELRWRQRRAAKGARSVEEE) are Cytoplasmic-facing.

In terms of assembly, homooligomer. Interacts with CRYAB; in the cellular response to DNA damage.

The protein localises to the nucleus outer membrane. It localises to the endoplasmic reticulum membrane. The protein resides in the sarcoplasmic reticulum membrane. It carries out the reaction K(+)(in) = K(+)(out). The catalysed reaction is Ca(2+)(in) = Ca(2+)(out). In terms of biological role, functions as a voltage-gated monoatomic cation channel permeable to both potassium and calcium. Plays a role in the cellular response to DNA damage. In Homo sapiens (Human), this protein is Voltage-gated monoatomic cation channel TMEM109.